Consider the following 108-residue polypeptide: Succinate dehydrogenase assembly factor 4, mitochondrial (108 aa).

Residues 1-20 (MTPSRLPWLLSWVSATAWRA) constitute a mitochondrion transit peptide. The segment at 31–108 (RKTSSSQGGK…WERKGRCIDF (78 aa)) is disordered. Composition is skewed to basic and acidic residues over residues 52 to 87 (KLPEGRFDAPEDSHLEKEPLEKFPDDVNPVTKEKGG) and 95 to 108 (RYGDWERKGRCIDF).

Belongs to the SDHAF4 family. As to quaternary structure, interacts with SDHA in its FAD-bound form.

It localises to the mitochondrion matrix. Its function is as follows. Plays an essential role in the assembly of succinate dehydrogenase (SDH), an enzyme complex (also referred to as respiratory complex II) that is a component of both the tricarboxylic acid (TCA) cycle and the mitochondrial electron transport chain, and which couples the oxidation of succinate to fumarate with the reduction of ubiquinone (coenzyme Q) to ubiquinol. Binds to the flavoprotein subunit SDHA in its FAD-bound form, blocking the generation of excess reactive oxygen species (ROS) and facilitating its assembly with the iron-sulfur protein subunit SDHB into the SDH catalytic dimer. The sequence is that of Succinate dehydrogenase assembly factor 4, mitochondrial from Homo sapiens (Human).